The chain runs to 100 residues: RxLR effector protein SFI8 (100 aa).

Residues 1-22 (MRSILYAVLAFAVLARSSAVAA) form the signal peptide. The RxLR-dEER motif lies at 43–57 (RSLRVEAQEVIQSGR). The Calmodulin-binding motif signature appears at 78 to 82 (KPDIK).

The protein belongs to the RxLR effector family. As to quaternary structure, interacts with the host calmodulin.

It is found in the secreted. It localises to the host nucleus. The protein localises to the host cytoplasm. Effector that suppresses flg22-induced post-translational MAP kinase activation both tomato and Arabidopsis. The perception of highly conserved pathogen- or microbe-associated molecular patterns (PAMPs/MAMPs), such as flg22, triggers converging signaling pathways recruiting MAP kinase cascades and inducing transcriptional re-programming, yielding a generic antimicrobial response. Associates with calmodulin to interfere with plant defense-associated calcium signaling in hosts. The polypeptide is RxLR effector protein SFI8 (Phytophthora infestans (strain T30-4) (Potato late blight agent)).